The following is a 247-amino-acid chain: MASLGVNIDHIANVRQARRTVEPDPVPMALLAELGGADGITVHLREDRRHIQDRDVDLLRQTVRSRLNLEMAATEDMVLIALRVQPDMVTLVPERREEVTTEGGLDVSSQRVDLTSKISRLQDAGIPVSLFVDPERGQLEACRDCRARWVELHTGTYAEAKWTDQPSELARLTEATALARAMGLRVNAGHGLTYQNVEPVAAIEGMEELNIGHTIVARAVAVGLQQAVREMKALVQNPRRDPLFGSY.

N7 serves as a coordination point for 3-amino-2-oxopropyl phosphate. A 1-deoxy-D-xylulose 5-phosphate-binding site is contributed by 9 to 10 (DH). R18 lines the 3-amino-2-oxopropyl phosphate pocket. H43 functions as the Proton acceptor in the catalytic mechanism. 1-deoxy-D-xylulose 5-phosphate is bound by residues R45 and H50. E70 serves as the catalytic Proton acceptor. T100 contributes to the 1-deoxy-D-xylulose 5-phosphate binding site. H190 serves as the catalytic Proton donor. 3-amino-2-oxopropyl phosphate-binding positions include G191 and 212-213 (GH).

This sequence belongs to the PNP synthase family. In terms of assembly, homooctamer; tetramer of dimers.

Its subcellular location is the cytoplasm. The catalysed reaction is 3-amino-2-oxopropyl phosphate + 1-deoxy-D-xylulose 5-phosphate = pyridoxine 5'-phosphate + phosphate + 2 H2O + H(+). Its pathway is cofactor biosynthesis; pyridoxine 5'-phosphate biosynthesis; pyridoxine 5'-phosphate from D-erythrose 4-phosphate: step 5/5. Catalyzes the complicated ring closure reaction between the two acyclic compounds 1-deoxy-D-xylulose-5-phosphate (DXP) and 3-amino-2-oxopropyl phosphate (1-amino-acetone-3-phosphate or AAP) to form pyridoxine 5'-phosphate (PNP) and inorganic phosphate. The protein is Pyridoxine 5'-phosphate synthase of Synechococcus sp. (strain WH7803).